Here is a 102-residue protein sequence, read N- to C-terminus: Turripeptide OL55-like (102 aa).

In terms of processing, contains 8 disulfide bonds. In terms of tissue distribution, expressed by the venom duct.

The protein resides in the secreted. Its function is as follows. Acts as a neurotoxin by inhibiting an ion channel. The polypeptide is Turripeptide OL55-like (Lophiotoma acuta (Marbled turris)).